The chain runs to 684 residues: Phenoloxidase 2 (684 aa).

Positions 1 to 50 are excised as a propeptide; it reads MADKKNLLLLFDHPTEPVFMDKGKRVTVFDVPDSFLTDRYRPISNEVQSR. Residues H208, H212, and H238 each coordinate Cu cation. The Proton acceptor role is filled by E350. The Cu cation site is built by H365, H369, and H405. N448 and N492 each carry an N-linked (GlcNAc...) asparagine glycan. 2 cysteine pairs are disulfide-bonded: C581–C623 and C583–C630. 2 N-linked (GlcNAc...) asparagine glycosylation sites follow: N665 and N677.

The protein belongs to the tyrosinase family. Cu(2+) is required as a cofactor. In terms of processing, upon activation, a trypsin type protease cleaves prophenol oxidase to yield the active enzyme.

The protein localises to the secreted. The enzyme catalyses 2 L-dopa + O2 = 2 L-dopaquinone + 2 H2O. It carries out the reaction L-tyrosine + O2 = L-dopaquinone + H2O. This is a copper-containing oxidase that functions in the formation of pigments such as melanins and other polyphenolic compounds. Catalyzes the rate-limiting conversions of tyrosine to DOPA, DOPA to DOPA-quinone and possibly 5,6 dihydroxyindole to indole-5'6 quinonee. This is Phenoloxidase 2 (PPO2) from Drosophila melanogaster (Fruit fly).